The following is a 295-amino-acid chain: Pyridoxal 5'-phosphate synthase subunit PdxS (295 aa).

D25 lines the D-ribose 5-phosphate pocket. The active-site Schiff-base intermediate with D-ribose 5-phosphate is the K82. A D-ribose 5-phosphate-binding site is contributed by G154. Residue R166 coordinates D-glyceraldehyde 3-phosphate. Residues G215 and 236-237 each bind D-ribose 5-phosphate; that span reads GS.

It belongs to the PdxS/SNZ family. In the presence of PdxT, forms a dodecamer of heterodimers.

It catalyses the reaction aldehydo-D-ribose 5-phosphate + D-glyceraldehyde 3-phosphate + L-glutamine = pyridoxal 5'-phosphate + L-glutamate + phosphate + 3 H2O + H(+). It participates in cofactor biosynthesis; pyridoxal 5'-phosphate biosynthesis. Its function is as follows. Catalyzes the formation of pyridoxal 5'-phosphate from ribose 5-phosphate (RBP), glyceraldehyde 3-phosphate (G3P) and ammonia. The ammonia is provided by the PdxT subunit. Can also use ribulose 5-phosphate and dihydroxyacetone phosphate as substrates, resulting from enzyme-catalyzed isomerization of RBP and G3P, respectively. This chain is Pyridoxal 5'-phosphate synthase subunit PdxS, found in Bacillus cytotoxicus (strain DSM 22905 / CIP 110041 / 391-98 / NVH 391-98).